Here is a 420-residue protein sequence, read N- to C-terminus: Glucose-1-phosphate adenylyltransferase (420 aa).

Residues tyrosine 107, glycine 173, 188–189 (EK), and serine 206 contribute to the alpha-D-glucose 1-phosphate site.

This sequence belongs to the bacterial/plant glucose-1-phosphate adenylyltransferase family. As to quaternary structure, homotetramer.

It catalyses the reaction alpha-D-glucose 1-phosphate + ATP + H(+) = ADP-alpha-D-glucose + diphosphate. It participates in glycan biosynthesis; glycogen biosynthesis. Functionally, involved in the biosynthesis of ADP-glucose, a building block required for the elongation reactions to produce glycogen. Catalyzes the reaction between ATP and alpha-D-glucose 1-phosphate (G1P) to produce pyrophosphate and ADP-Glc. The sequence is that of Glucose-1-phosphate adenylyltransferase from Shewanella frigidimarina (strain NCIMB 400).